Here is a 2060-residue protein sequence, read N- to C-terminus: Fatty acid synthase subunit beta (2060 aa).

Residues 1-32 (MFPGDMESKASSMNGDQPSSPTPSSSTSVTIP) are disordered. Residues 18 to 32 (PSSPTPSSSTSVTIP) are compositionally biased toward low complexity. Positions 182 to 543 (VYVIFGGQGN…KAGQGVRVIH (362 aa)) are acetyltransferase (AT) domain. Residue serine 301 is the For acetyltransferase activity of the active site. The tract at residues 600-845 (TRLFLQPPIM…LIVATEGAPD (246 aa)) is enoyl reductase (ER) domain. Residues 1157–1640 (DKNLNWAKAL…CTGDRLAVSM (484 aa)) are dehydratase (DH) domain. One can recognise a MaoC-like domain in the interval 1549–1661 (FEEQEISFTA…VEVQIHKNMA (113 aa)). Positions 1679–2043 (LVFTGQGSQK…FNEVLRLTGS (365 aa)) are malonyl/palmitoyl transferase (MT/PT) domain. The active-site For malonyltransferase activity is the serine 1824.

Belongs to the fungal fatty acid synthetase subunit beta family. [Alpha(6)beta(6)] hexamers of two multifunctional subunits (alpha and beta).

It catalyses the reaction acetyl-CoA + n malonyl-CoA + 2n NADPH + 4n H(+) = a long-chain-acyl-CoA + n CoA + n CO2 + 2n NADP(+).. It carries out the reaction holo-[ACP] + acetyl-CoA = acetyl-[ACP] + CoA. The catalysed reaction is holo-[ACP] + malonyl-CoA = malonyl-[ACP] + CoA. The enzyme catalyses a (3R)-hydroxyacyl-[ACP] = a (2E)-enoyl-[ACP] + H2O. It catalyses the reaction a 2,3-saturated acyl-[ACP] + NAD(+) = a (2E)-enoyl-[ACP] + NADH + H(+). It carries out the reaction (9Z)-octadecenoyl-[ACP] + H2O = (9Z)-octadecenoate + holo-[ACP] + H(+). Its pathway is mycotoxin biosynthesis. Fatty acid synthase subunit beta; part of the gene cluster that mediates the biosynthesis of gramillins A and B, bicyclic lipopeptides that induce cell death in maize leaves but not in wheat leaves. The nonribosomal peptide synthetase GRA1 incorporates respectively a glutamic adic (Glu), a leucine (Leu), a serine (Ser), a hydroxyglutamine (HOGln), a 2-amino decanoic acid, and 2 cysteins (CysB and CysA). The biosynthesis of 2-amino decanoic acid incorporated in gramillins could be initiated by a fatty acid synthase composed of the alpha and beta subunits FGSG_00036 and FGSG_11656. The cytochrome P450 monooxygenase FGSG_15680 could hydroxylate the fatty acid chain. Subsequent oxidation to the ketone by the oxidoreductase FGSG_00048 and transamination by aminotransferase FGSG_00049 could form 2-amino-decanoic acid. On the other hand, FGSG_15680 could also be responsible for the HO-modified glutamine at the gamma-position. Whether hydroxylation occurs on the fully assembled product or on the Gln residue prior to assembly into the gramillins requires further proof. The thioredoxin FGSG_00043 could also be required for the disulfide-bond formation between CysA and CysB. The specific involvement of the remaining proteins from the cluster is more difficult to discern, but could have broader regulatory (FGSG_00040 and FGSG_11657) or enzymatic functions (FGSG_00044 and FGSG_00045). The final C-domain of GRA1 does not possess the expected sequence of a termination CT domain, often implicated in macrocyclization and release of a cyclopeptidein fungal NRPs; and the thioesterase FGSG_00047 may act in concert with the terminal C-domain of GRA1 to catalyze the formation of the macrocyclic anhydride and release of the products. This Gibberella zeae (strain ATCC MYA-4620 / CBS 123657 / FGSC 9075 / NRRL 31084 / PH-1) (Wheat head blight fungus) protein is Fatty acid synthase subunit beta.